A 170-amino-acid chain; its full sequence is Bifunctional protein PyrR (170 aa).

The short motif at 90–102 is the PRPP-binding element; it reads LVLVDDVLMSGRT.

This sequence belongs to the purine/pyrimidine phosphoribosyltransferase family. PyrR subfamily.

It catalyses the reaction UMP + diphosphate = 5-phospho-alpha-D-ribose 1-diphosphate + uracil. Regulates the transcription of the pyrimidine nucleotide (pyr) operon in response to exogenous pyrimidines. Functionally, also displays a weak uracil phosphoribosyltransferase activity which is not physiologically significant. The chain is Bifunctional protein PyrR from Pseudomonas paraeruginosa (strain DSM 24068 / PA7) (Pseudomonas aeruginosa (strain PA7)).